The following is a 100-amino-acid chain: Urease subunit gamma (100 aa).

The protein belongs to the urease gamma subunit family. In terms of assembly, heterotrimer of UreA (gamma), UreB (beta) and UreC (alpha) subunits. Three heterotrimers associate to form the active enzyme.

The protein localises to the cytoplasm. It catalyses the reaction urea + 2 H2O + H(+) = hydrogencarbonate + 2 NH4(+). Its pathway is nitrogen metabolism; urea degradation; CO(2) and NH(3) from urea (urease route): step 1/1. This Synechococcus sp. (strain RCC307) protein is Urease subunit gamma.